A 337-amino-acid polypeptide reads, in one-letter code: Glucokinase (337 aa).

11–16 (ADIGGT) is an ATP binding site.

This sequence belongs to the bacterial glucokinase family.

It localises to the cytoplasm. The enzyme catalyses D-glucose + ATP = D-glucose 6-phosphate + ADP + H(+). This chain is Glucokinase, found in Xylella fastidiosa (strain 9a5c).